We begin with the raw amino-acid sequence, 295 residues long: Ribosomal RNA small subunit methyltransferase H (295 aa).

S-adenosyl-L-methionine contacts are provided by residues 36–38, Asp56, Leu90, Asp104, and His111; that span reads GGH.

It belongs to the methyltransferase superfamily. RsmH family.

The protein resides in the cytoplasm. It catalyses the reaction cytidine(1402) in 16S rRNA + S-adenosyl-L-methionine = N(4)-methylcytidine(1402) in 16S rRNA + S-adenosyl-L-homocysteine + H(+). Its function is as follows. Specifically methylates the N4 position of cytidine in position 1402 (C1402) of 16S rRNA. In Dictyoglomus turgidum (strain DSM 6724 / Z-1310), this protein is Ribosomal RNA small subunit methyltransferase H.